Here is a 464-residue protein sequence, read N- to C-terminus: tRNA modification GTPase MnmE (464 aa).

The (6S)-5-formyl-5,6,7,8-tetrahydrofolate site is built by R29, E91, and R131. Residues 226–387 (GLKVALAGKP…LINYLLKKCG (162 aa)) enclose the TrmE-type G domain. N236 provides a ligand contact to K(+). GTP contacts are provided by residues 236–241 (NVGKSS), 255–261 (TDLPGTT), and 280–283 (DTAG). Position 240 (S240) interacts with Mg(2+). T255, L257, and T260 together coordinate K(+). T261 contacts Mg(2+). (6S)-5-formyl-5,6,7,8-tetrahydrofolate is bound at residue K464.

This sequence belongs to the TRAFAC class TrmE-Era-EngA-EngB-Septin-like GTPase superfamily. TrmE GTPase family. In terms of assembly, homodimer. Heterotetramer of two MnmE and two MnmG subunits. K(+) serves as cofactor.

The protein resides in the cytoplasm. Functionally, exhibits a very high intrinsic GTPase hydrolysis rate. Involved in the addition of a carboxymethylaminomethyl (cmnm) group at the wobble position (U34) of certain tRNAs, forming tRNA-cmnm(5)s(2)U34. This is tRNA modification GTPase MnmE from Prochlorococcus marinus (strain NATL1A).